A 177-amino-acid polypeptide reads, in one-letter code: ATP synthase subunit delta (177 aa).

This sequence belongs to the ATPase delta chain family. In terms of assembly, F-type ATPases have 2 components, F(1) - the catalytic core - and F(0) - the membrane proton channel. F(1) has five subunits: alpha(3), beta(3), gamma(1), delta(1), epsilon(1). F(0) has three main subunits: a(1), b(2) and c(10-14). The alpha and beta chains form an alternating ring which encloses part of the gamma chain. F(1) is attached to F(0) by a central stalk formed by the gamma and epsilon chains, while a peripheral stalk is formed by the delta and b chains.

The protein localises to the cell inner membrane. Its function is as follows. F(1)F(0) ATP synthase produces ATP from ADP in the presence of a proton or sodium gradient. F-type ATPases consist of two structural domains, F(1) containing the extramembraneous catalytic core and F(0) containing the membrane proton channel, linked together by a central stalk and a peripheral stalk. During catalysis, ATP synthesis in the catalytic domain of F(1) is coupled via a rotary mechanism of the central stalk subunits to proton translocation. In terms of biological role, this protein is part of the stalk that links CF(0) to CF(1). It either transmits conformational changes from CF(0) to CF(1) or is implicated in proton conduction. This chain is ATP synthase subunit delta, found in Shewanella sp. (strain ANA-3).